Reading from the N-terminus, the 146-residue chain is Flagellar assembly factor FliW (146 aa).

It belongs to the FliW family. Interacts with translational regulator CsrA and flagellin(s).

The protein localises to the cytoplasm. Functionally, acts as an anti-CsrA protein, binds CsrA and prevents it from repressing translation of its target genes, one of which is flagellin. Binds to flagellin and participates in the assembly of the flagellum. The polypeptide is Flagellar assembly factor FliW (Azoarcus sp. (strain BH72)).